A 102-amino-acid chain; its full sequence is Large ribosomal subunit protein uL24 (102 aa).

Belongs to the universal ribosomal protein uL24 family. In terms of assembly, part of the 50S ribosomal subunit.

Functionally, one of two assembly initiator proteins, it binds directly to the 5'-end of the 23S rRNA, where it nucleates assembly of the 50S subunit. In terms of biological role, one of the proteins that surrounds the polypeptide exit tunnel on the outside of the subunit. The chain is Large ribosomal subunit protein uL24 from Allorhizobium ampelinum (strain ATCC BAA-846 / DSM 112012 / S4) (Agrobacterium vitis (strain S4)).